Consider the following 209-residue polypeptide: Small ribosomal subunit protein uS3 (209 aa).

The KH type-2 domain maps to 38–107 (IRKVIKSKYA…RFIVNVEEIK (70 aa)).

Belongs to the universal ribosomal protein uS3 family. Part of the 30S ribosomal subunit. Forms a tight complex with proteins S10 and S14.

In terms of biological role, binds the lower part of the 30S subunit head. Binds mRNA in the 70S ribosome, positioning it for translation. This chain is Small ribosomal subunit protein uS3, found in Thermosipho melanesiensis (strain DSM 12029 / CIP 104789 / BI429).